We begin with the raw amino-acid sequence, 247 residues long: Adenosylcobinamide-GDP ribazoletransferase (247 aa).

The next 6 helical transmembrane spans lie at 31-51, 57-77, 109-129, 136-156, 189-209, and 218-238; these read VVWF…AAAL, PWLG…GLHL, FGVI…HWLL, PALV…TLLL, ITPI…WMWL, and ILGA…GVSL.

Belongs to the CobS family. It depends on Mg(2+) as a cofactor.

The protein resides in the cell inner membrane. The enzyme catalyses alpha-ribazole + adenosylcob(III)inamide-GDP = adenosylcob(III)alamin + GMP + H(+). The catalysed reaction is alpha-ribazole 5'-phosphate + adenosylcob(III)inamide-GDP = adenosylcob(III)alamin 5'-phosphate + GMP + H(+). Its pathway is cofactor biosynthesis; adenosylcobalamin biosynthesis; adenosylcobalamin from cob(II)yrinate a,c-diamide: step 7/7. Joins adenosylcobinamide-GDP and alpha-ribazole to generate adenosylcobalamin (Ado-cobalamin). Also synthesizes adenosylcobalamin 5'-phosphate from adenosylcobinamide-GDP and alpha-ribazole 5'-phosphate. The polypeptide is Adenosylcobinamide-GDP ribazoletransferase (Thiobacillus denitrificans (strain ATCC 25259 / T1)).